The sequence spans 146 residues: Large ribosomal subunit protein uL16 (146 aa).

It belongs to the universal ribosomal protein uL16 family. As to quaternary structure, part of the 50S ribosomal subunit.

Functionally, binds 23S rRNA and is also seen to make contacts with the A and possibly P site tRNAs. This Thermomicrobium roseum (strain ATCC 27502 / DSM 5159 / P-2) protein is Large ribosomal subunit protein uL16.